A 454-amino-acid chain; its full sequence is Carbamoyl phosphate synthase arginine-specific small chain (454 aa).

A mitochondrion-targeting transit peptide spans 1-29 (MMFSRFFKAVPARAPAFSSPLPVYQARTM). The Glutamine amidotransferase type-1 domain maps to 219–406 (HVAVLDCGVK…IDSVKKYKNS (188 aa)). C295 acts as the Nucleophile in catalysis. Catalysis depends on residues H379 and E381.

The protein belongs to the CarA family. As to quaternary structure, heterodimer composed of 2 chains; the small (or glutamine) chain promotes the hydrolysis of glutamine to ammonia, which is used by the large (or ammonia) chain to synthesize carbamoyl phosphate.

The protein localises to the mitochondrion matrix. The catalysed reaction is hydrogencarbonate + L-glutamine + 2 ATP + H2O = carbamoyl phosphate + L-glutamate + 2 ADP + phosphate + 2 H(+). It carries out the reaction L-glutamine + H2O = L-glutamate + NH4(+). It functions in the pathway amino-acid biosynthesis; L-arginine biosynthesis; carbamoyl phosphate from bicarbonate: step 1/1. Its function is as follows. Small subunit of the arginine-specific carbamoyl phosphate synthase (CPSase). CPSase catalyzes the formation of carbamoyl phosphate from the ammonia moiety of glutamine, carbonate, and phosphate donated by ATP, the first step of the arginine biosynthetic pathway. The small subunit (glutamine amidotransferase) binds and cleaves glutamine to supply the large subunit with the substrate ammonia. The polypeptide is Carbamoyl phosphate synthase arginine-specific small chain (cpa-1) (Emericella nidulans (strain FGSC A4 / ATCC 38163 / CBS 112.46 / NRRL 194 / M139) (Aspergillus nidulans)).